The following is a 99-amino-acid chain: UPF0235 protein PM1313 (99 aa).

Belongs to the UPF0235 family.

The chain is UPF0235 protein PM1313 from Pasteurella multocida (strain Pm70).